The following is a 388-amino-acid chain: Succinate--CoA ligase [ADP-forming] subunit beta (388 aa).

Residues Lys-46, 53-55 (GRG), Glu-99, Cys-102, and Glu-107 each bind ATP. Residues Asn-199 and Asp-213 each coordinate Mg(2+). Substrate is bound by residues Asn-264 and 321 to 323 (GIV).

It belongs to the succinate/malate CoA ligase beta subunit family. Heterotetramer of two alpha and two beta subunits. Requires Mg(2+) as cofactor.

It catalyses the reaction succinate + ATP + CoA = succinyl-CoA + ADP + phosphate. The enzyme catalyses GTP + succinate + CoA = succinyl-CoA + GDP + phosphate. Its pathway is carbohydrate metabolism; tricarboxylic acid cycle; succinate from succinyl-CoA (ligase route): step 1/1. Its function is as follows. Succinyl-CoA synthetase functions in the citric acid cycle (TCA), coupling the hydrolysis of succinyl-CoA to the synthesis of either ATP or GTP and thus represents the only step of substrate-level phosphorylation in the TCA. The beta subunit provides nucleotide specificity of the enzyme and binds the substrate succinate, while the binding sites for coenzyme A and phosphate are found in the alpha subunit. This chain is Succinate--CoA ligase [ADP-forming] subunit beta, found in Actinobacillus pleuropneumoniae serotype 7 (strain AP76).